We begin with the raw amino-acid sequence, 921 residues long: Isoleucine--tRNA ligase (921 aa).

Residues 57 to 67 (PYANGELHMGH) carry the 'HIGH' region motif. Glu-552 serves as a coordination point for L-isoleucyl-5'-AMP. The 'KMSKS' region motif lies at 593-597 (KMSKS). Lys-596 is an ATP binding site. Zn(2+) contacts are provided by Cys-888, Cys-891, Cys-908, and Cys-911.

Belongs to the class-I aminoacyl-tRNA synthetase family. IleS type 1 subfamily. Monomer. Zn(2+) serves as cofactor.

Its subcellular location is the cytoplasm. The catalysed reaction is tRNA(Ile) + L-isoleucine + ATP = L-isoleucyl-tRNA(Ile) + AMP + diphosphate. Its function is as follows. Catalyzes the attachment of isoleucine to tRNA(Ile). As IleRS can inadvertently accommodate and process structurally similar amino acids such as valine, to avoid such errors it has two additional distinct tRNA(Ile)-dependent editing activities. One activity is designated as 'pretransfer' editing and involves the hydrolysis of activated Val-AMP. The other activity is designated 'posttransfer' editing and involves deacylation of mischarged Val-tRNA(Ile). This is Isoleucine--tRNA ligase from Listeria monocytogenes serovar 1/2a (strain ATCC BAA-679 / EGD-e).